Consider the following 246-residue polypeptide: Carboxymethylenebutenolidase homolog (246 aa).

Residues Cys132, Asp179, and His212 contribute to the active site.

This sequence belongs to the dienelactone hydrolase family.

It is found in the cytoplasm. The protein resides in the cytosol. In terms of biological role, cysteine hydrolase. This chain is Carboxymethylenebutenolidase homolog (cmbl), found in Xenopus tropicalis (Western clawed frog).